Consider the following 1622-residue polypeptide: Ferredoxin-dependent glutamate synthase 1, chloroplastic/mitochondrial (1622 aa).

A chloroplast and mitochondrion-targeting transit peptide spans 1–105 (MAMQSLSPVP…LEDILSERGA (105 aa)). The For GATase activity role is filled by Cys106. The Glutamine amidotransferase type-2 domain maps to 106 to 505 (CGVGFIANLD…PGMMIAVDLV (400 aa)). Residue 1184-1241 (LTETHQTLIANGLRERVILRVDGGLKSGVDVLMAAAMGADEYGFGSLAMIATGCVMAR) participates in FMN binding. The [3Fe-4S] cluster site is built by Cys1237, Cys1243, and Cys1248.

This sequence belongs to the glutamate synthase family. In terms of assembly, interacts with SHM1. [3Fe-4S] cluster is required as a cofactor. It depends on FAD as a cofactor. Requires FMN as cofactor. Highly expressed in leaves. High expression in the leaf mesophyll and phloem companion cell-sieve element complex.

It localises to the plastid. It is found in the chloroplast stroma. The protein localises to the mitochondrion matrix. The catalysed reaction is 2 oxidized [2Fe-2S]-[ferredoxin] + 2 L-glutamate = L-glutamine + 2 reduced [2Fe-2S]-[ferredoxin] + 2-oxoglutarate + 2 H(+). It participates in amino-acid biosynthesis; L-glutamate biosynthesis via GLT pathway; L-glutamate from 2-oxoglutarate and L-glutamine (ferredoxin route): step 1/1. Its pathway is energy metabolism; nitrogen metabolism. In terms of biological role, involved in glutamate biosynthesis in leaf. Required for the reassimilation of ammonium ions generated during photorespiration. The chain is Ferredoxin-dependent glutamate synthase 1, chloroplastic/mitochondrial from Arabidopsis thaliana (Mouse-ear cress).